We begin with the raw amino-acid sequence, 112 residues long: MSAESPEPASAEEQKEMEDKVLSPEKAEEAKLKARYPHLGQKPGGSDFLRKRLQKGQKYFDSGDYNMAKAKMKNKQLPTAAPDKTEVTGDHIPTPQDLPQRKPSLVASKLAG.

The segment covering 1 to 11 has biased composition (low complexity); sequence MSAESPEPASA. The tract at residues 1–49 is disordered; it reads MSAESPEPASAEEQKEMEDKVLSPEKAEEAKLKARYPHLGQKPGGSDFL. The span at 12-32 shows a compositional bias: basic and acidic residues; the sequence is EEQKEMEDKVLSPEKAEEAKL. A phosphoserine; by GWL mark is found at Ser62 and Ser104. Positions 72–112 are disordered; sequence MKNKQLPTAAPDKTEVTGDHIPTPQDLPQRKPSLVASKLAG. A Phosphoserine; by PKA modification is found at Ser104.

The protein belongs to the endosulfine family. In terms of assembly, interacts (when phosphorylated at Ser-62) with PPP2R2D. In terms of processing, phosphorylation at Ser-62 by MASTL/GWL during mitosis is essential for interaction with PPP2R2D (PR55-delta) and subsequent inactivation of PP2A.

The protein localises to the cytoplasm. Functionally, protein phosphatase inhibitor that specifically inhibits protein phosphatase 2A (PP2A) during mitosis. Inhibition of PP2A is enhanced when ARPP19 is phosphorylated. When phosphorylated at Ser-62 during mitosis, specifically interacts with PPP2R2D (PR55-delta) and inhibits its activity, leading to inactivation of PP2A, an essential condition to keep cyclin-B1-CDK1 activity high during M phase. The polypeptide is cAMP-regulated phosphoprotein 19 (ARPP19) (Taeniopygia guttata (Zebra finch)).